A 153-amino-acid polypeptide reads, in one-letter code: 4'-phosphopantetheinyl transferase B, mitochondrial (153 aa).

The protein belongs to the P-Pant transferase superfamily.

It localises to the mitochondrion. The catalysed reaction is apo-[ACP] + CoA = holo-[ACP] + adenosine 3',5'-bisphosphate + H(+). Acyl-carrier-protein synthase transfers the 4'-phosphopantetheine moiety from coenzyme A to a Ser of an acyl-carrier-protein. The 4'-phosphopantetheine (4'-PPT) portion of CoA provides the essential prosthetic group for a number of carrier proteins and multi-domain enzymes, priming them for the acceptance of acyl building blocks in fatty acid synthesis and many aspects of secondary metabolism mediated by polyketide synthases (PKSs) and non-ribosomal peptide synthetases (NRPSs). PptB is specific for the mitochondrial acyl carrier protein acpA. This chain is 4'-phosphopantetheinyl transferase B, mitochondrial, found in Aspergillus fumigatus (strain ATCC MYA-4609 / CBS 101355 / FGSC A1100 / Af293) (Neosartorya fumigata).